A 322-amino-acid chain; its full sequence is Tlg2p-like protein a (322 aa).

Topologically, residues 1–301 (MATRNRTLLF…QRHGGMVKCA (301 aa)) are cytoplasmic. A coiled-coil region spans residues 116-146 (KEDQHNIESLTQEITFLLKKSEKQLQRLSAS). Positions 226–288 (EEVSVEREKE…EDGLKQLQKA (63 aa)) constitute a t-SNARE coiled-coil homology domain. A helical; Anchor for type IV membrane protein membrane pass occupies residues 302–322 (SVLVILCFIMLLLLILKEIFL).

Belongs to the syntaxin family. In terms of assembly, interacts with VTI12 and SYP61 to form a t-SNARE complex and with VPS45. Interacts with TNO1. Binds to YKT61 and YKT62. Core constituent of the SNARE complex required for membrane fusion at the trans-Golgi network. Mostly expressed in flowers, to a lower extent in leaves and roots, and, at low levels, in stems.

It is found in the golgi apparatus. The protein localises to the trans-Golgi network membrane. Contributes to the regulation of secretory and vacuolar transport pathways in the post-Golgi network, and to the maintenance of the Golgi apparatus and trans-Golgi network (TGN) morphologies. Together with VTI12, required for membrane fusion. Vesicle trafficking protein that functions in the secretory pathway and mediates liposome fusion; the fusion of phospholipid vesicles containing SYP41 and VTI12 is triggered by YKT61 and YKT62. Required for extracellular resistance responses to a fungal pathogen. Also involved in the protection of chloroplasts from salicylic acid-dependent biotic stress. The sequence is that of Tlg2p-like protein a from Arabidopsis thaliana (Mouse-ear cress).